The primary structure comprises 425 residues: Dihydroorotase (425 aa).

2 residues coordinate Zn(2+): H56 and H58. Substrate contacts are provided by residues 58–60 (HYR) and N90. D148, H175, and H228 together coordinate Zn(2+). N274 is a binding site for substrate. D301 lines the Zn(2+) pocket. Residue D301 is part of the active site. Substrate-binding positions include H305 and 319–320 (FG).

This sequence belongs to the metallo-dependent hydrolases superfamily. DHOase family. Class I DHOase subfamily. It depends on Zn(2+) as a cofactor.

The catalysed reaction is (S)-dihydroorotate + H2O = N-carbamoyl-L-aspartate + H(+). It functions in the pathway pyrimidine metabolism; UMP biosynthesis via de novo pathway; (S)-dihydroorotate from bicarbonate: step 3/3. In terms of biological role, catalyzes the reversible cyclization of carbamoyl aspartate to dihydroorotate. The sequence is that of Dihydroorotase from Lactobacillus gasseri (strain ATCC 33323 / DSM 20243 / BCRC 14619 / CIP 102991 / JCM 1131 / KCTC 3163 / NCIMB 11718 / NCTC 13722 / AM63).